Reading from the N-terminus, the 240-residue chain is MAENVLSAQKRTEQGKGPARRLRQQGLIPAVVYGGKREPTHVALDPATLLKAIETPHKFNTLLELQVDGASKHVLFKDYTVDPVTRKLLHADFLEVSLDQPVRVEVPVATVGRAAGVAEGGILSVATHEVVVEALPNKIPVRIEVDVTELKIGRSLHVSELKPPEGCKFKFQTDYVVVFVAVPEKEEVAAPVAAAVPGAAPAEGAAPAAGAAAPAGGAAPAAGAAPAKGGEAKGGDKAKK.

Disordered regions lie at residues 1–20 (MAEN…GPAR) and 204–240 (GAAP…KAKK). Positions 204 to 229 (GAAPAAGAAAPAGGAAPAAGAAPAKG) are enriched in low complexity. Positions 230-240 (GEAKGGDKAKK) are enriched in basic and acidic residues.

The protein belongs to the bacterial ribosomal protein bL25 family. CTC subfamily. In terms of assembly, part of the 50S ribosomal subunit; part of the 5S rRNA/L5/L18/L25 subcomplex. Contacts the 5S rRNA. Binds to the 5S rRNA independently of L5 and L18.

Its function is as follows. This is one of the proteins that binds to the 5S RNA in the ribosome where it forms part of the central protuberance. The polypeptide is Large ribosomal subunit protein bL25 (Anaeromyxobacter sp. (strain K)).